The following is a 235-amino-acid chain: 7-carboxy-7-deazaguanine synthase (235 aa).

Substrate is bound by residues 27–29 and R42; that span reads LQG. Residues 33–235 form the Radical SAM core domain; that stretch reads FSGQPSVFVR…VQVHKILKIA (203 aa). [4Fe-4S] cluster contacts are provided by C46, C50, and C53. T55 contacts Mg(2+). Residue T87 participates in substrate binding. S-adenosyl-L-methionine contacts are provided by residues G89 and 133-135; that span reads SPK.

The protein belongs to the radical SAM superfamily. 7-carboxy-7-deazaguanine synthase family. Homodimer. It depends on [4Fe-4S] cluster as a cofactor. S-adenosyl-L-methionine serves as cofactor. The cofactor is Mg(2+).

The catalysed reaction is 6-carboxy-5,6,7,8-tetrahydropterin + H(+) = 7-carboxy-7-deazaguanine + NH4(+). Its pathway is purine metabolism; 7-cyano-7-deazaguanine biosynthesis. Functionally, catalyzes the complex heterocyclic radical-mediated conversion of 6-carboxy-5,6,7,8-tetrahydropterin (CPH4) to 7-carboxy-7-deazaguanine (CDG), a step common to the biosynthetic pathways of all 7-deazapurine-containing compounds. This chain is 7-carboxy-7-deazaguanine synthase, found in Rhodospirillum rubrum (strain ATCC 11170 / ATH 1.1.1 / DSM 467 / LMG 4362 / NCIMB 8255 / S1).